Reading from the N-terminus, the 104-residue chain is L-rhamnose mutarotase (104 aa).

Y18 is a binding site for substrate. H22 acts as the Proton donor in catalysis. Substrate contacts are provided by residues Y41 and 76–77 (WW).

It belongs to the rhamnose mutarotase family. As to quaternary structure, homodimer.

Its subcellular location is the cytoplasm. The enzyme catalyses alpha-L-rhamnose = beta-L-rhamnose. The protein operates within carbohydrate metabolism; L-rhamnose metabolism. Involved in the anomeric conversion of L-rhamnose. The sequence is that of L-rhamnose mutarotase from Listeria monocytogenes serovar 1/2a (strain ATCC BAA-679 / EGD-e).